Here is a 245-residue protein sequence, read N- to C-terminus: MAAPTVTMQQLIEAGSHFGHQTHRWNPRMKPYIFGARNGVHIIDLSQTVPLMARALDFVHATANAGGKVLFVGTKRQAQEPIAEAARSSGQHFVNHRWLGGMLTNWQTISKSIKELKSLEEQLSGETHGLTKKEVLNLTRKRDKLELSLGGIRDMGGVPDVMVVIDANKEDLAIKEANVLGIPVVGILDTNVDPSGIAFPVPGNDDAARAVRLYCDAFAQAASKNGGGANVGEMENPPVEATADA.

Residues 226–245 (GGGANVGEMENPPVEATADA) form a disordered region.

It belongs to the universal ribosomal protein uS2 family.

This chain is Small ribosomal subunit protein uS2, found in Erythrobacter litoralis (strain HTCC2594).